The chain runs to 843 residues: Protein P (843 aa).

A terminal protein domain (TP) region spans residues 1-177; the sequence is MPLSYQHFRK…FCGSPYSWEQ (177 aa). The tract at residues 178–346 is spacer; the sequence is DLQHGRLVFQ…YCLSHIVNLI (169 aa). Positions 219–269 are disordered; the sequence is RKSRLGPQPAQGQLAGRQQGGSGSIRARVHPSPWGTVGVEPSGSGPTHNCA. Residues 223 to 235 show a composition bias toward low complexity; the sequence is LGPQPAQGQLAGR. Positions 347-690 are polymerase/reverse transcriptase domain (RT); it reads EDWGPCTEHG…YLNLYPVARQ (344 aa). The Reverse transcriptase domain occupies 357–600; it reads EHRIRTPRTP…YSLNFMGYVI (244 aa). Positions 429, 551, and 552 each coordinate Mg(2+).

Belongs to the hepadnaviridae P protein family.

It catalyses the reaction DNA(n) + a 2'-deoxyribonucleoside 5'-triphosphate = DNA(n+1) + diphosphate. The catalysed reaction is Endonucleolytic cleavage to 5'-phosphomonoester.. With respect to regulation, activated by host HSP70 and HSP40 in vitro to be able to bind the epsilon loop of the pgRNA. Because deletion of the RNase H region renders the protein partly chaperone-independent, the chaperones may be needed indirectly to relieve occlusion of the RNA-binding site by this domain. Inhibited by several reverse-transcriptase inhibitors: Lamivudine, Adefovir and Entecavir. Its function is as follows. Multifunctional enzyme that converts the viral RNA genome into dsDNA in viral cytoplasmic capsids. This enzyme displays a DNA polymerase activity that can copy either DNA or RNA templates, and a ribonuclease H (RNase H) activity that cleaves the RNA strand of RNA-DNA heteroduplexes in a partially processive 3'- to 5'-endonucleasic mode. Neo-synthesized pregenomic RNA (pgRNA) are encapsidated together with the P protein, and reverse-transcribed inside the nucleocapsid. Initiation of reverse-transcription occurs first by binding the epsilon loop on the pgRNA genome, and is initiated by protein priming, thereby the 5'-end of (-)DNA is covalently linked to P protein. Partial (+)DNA is synthesized from the (-)DNA template and generates the relaxed circular DNA (RC-DNA) genome. After budding and infection, the RC-DNA migrates in the nucleus, and is converted into a plasmid-like covalently closed circular DNA (cccDNA). The activity of P protein does not seem to be necessary for cccDNA generation, and is presumably released from (+)DNA by host nuclear DNA repair machinery. This Hepatitis B virus genotype B2 subtype adw (isolate China/patient4/1996) (HBV-B) protein is Protein P.